A 102-amino-acid chain; its full sequence is Cytochrome c (102 aa).

Glycine 1 is modified (N-acetylglycine). The span at 1-11 shows a compositional bias: basic and acidic residues; that stretch reads GDAERGKKLFE. The disordered stretch occupies residues 1 to 26; that stretch reads GDAERGKKLFESRAGQCHSSQKGVNS. The heme c site is built by cysteine 17, histidine 18, and methionine 79. Positions 17–26 are enriched in polar residues; sequence CHSSQKGVNS. At lysine 85 the chain carries N6,N6,N6-trimethyllysine.

It belongs to the cytochrome c family. In terms of processing, binds 1 heme c group covalently per subunit.

The protein localises to the mitochondrion intermembrane space. Electron carrier protein. The oxidized form of the cytochrome c heme group can accept an electron from the heme group of the cytochrome c1 subunit of cytochrome reductase. Cytochrome c then transfers this electron to the cytochrome oxidase complex, the final protein carrier in the mitochondrial electron-transport chain. In Euglena viridis (Cercaria viridis), this protein is Cytochrome c.